Consider the following 984-residue polypeptide: Detocs histidine-protein kinase DtcA (984 aa).

His-645 is subject to Phosphohistidine; by autocatalysis.

Autophosphorylated.

It catalyses the reaction ATP + protein L-histidine = ADP + protein N-phospho-L-histidine.. Its function is as follows. Sensor-kinase member of the two-component regulatory system Detocs that confers resistance to bacteriophage. When the system (DtcA-DtcB-DtcC) is expressed in a susceptible E.coli (strain MG1655) it confers resistance to bacteriophages T2, T4, T5, T6 and SECphi27. Detocs inhibits T5 infection leading to growth arrest but not complete cell lysis, during SECphi27 infection leads to cell lysis. DtcA (this subunit) probably autophosphorylates upon sensing viral infection, and subsequently transfers the phosphate signal to DtcC which activates it, leading to an antiviral defense; DtcB may scavenge phosphorylation signals from accidental activation of DtcA. The chain is Detocs histidine-protein kinase DtcA from Vibrio alginolyticus.